The following is a 1733-amino-acid chain: Protein NETWORKED 1D (1733 aa).

The region spanning 12 to 92 (YSWWWDSHIS…ERYDHATGVI (81 aa)) is the NAB domain. Coiled-coil stretches lie at residues 195 to 816 (KEIN…RESS), 897 to 931 (LIAE…QIDS), 960 to 1043 (DENS…QKLI), and 1196 to 1386 (ARSA…NDLM). The interval 1456-1476 (LKTSSARRSRRRNGSLRKQNH) is disordered. Residues 1460 to 1470 (SARRSRRRNGS) are compositionally biased toward basic residues. Coiled coils occupy residues 1553–1627 (ANKR…KVQN) and 1653–1686 (SEQA…DRED). Residues 1628-1656 (GFERSDGSKSSMDLDENESSRRRRISEQA) are disordered.

The protein belongs to the NET family.

Plant-specific actin binding protein. May be part of a membrane-cytoskeletal adapter complex. This Arabidopsis thaliana (Mouse-ear cress) protein is Protein NETWORKED 1D.